The sequence spans 279 residues: Large ribosomal subunit protein uL2 (279 aa).

The segment at 223–279 (MAMNPVDHPMGGGEGKSKSGGGRKHPKSPWGQLAKGLKTRNKKKASTKLIVRGRKAK) is disordered. Gly residues predominate over residues 232 to 242 (MGGGEGKSKSG). The span at 259–279 (LKTRNKKKASTKLIVRGRKAK) shows a compositional bias: basic residues.

This sequence belongs to the universal ribosomal protein uL2 family. In terms of assembly, part of the 50S ribosomal subunit. Forms a bridge to the 30S subunit in the 70S ribosome.

One of the primary rRNA binding proteins. Required for association of the 30S and 50S subunits to form the 70S ribosome, for tRNA binding and peptide bond formation. It has been suggested to have peptidyltransferase activity; this is somewhat controversial. Makes several contacts with the 16S rRNA in the 70S ribosome. In Chlorobaculum tepidum (strain ATCC 49652 / DSM 12025 / NBRC 103806 / TLS) (Chlorobium tepidum), this protein is Large ribosomal subunit protein uL2.